The chain runs to 270 residues: Orotidine 5'-phosphate decarboxylase (270 aa).

Lys89 acts as the Proton donor in catalysis.

This sequence belongs to the OMP decarboxylase family. Type 2 subfamily.

It carries out the reaction orotidine 5'-phosphate + H(+) = UMP + CO2. The protein operates within pyrimidine metabolism; UMP biosynthesis via de novo pathway; UMP from orotate: step 2/2. The protein is Orotidine 5'-phosphate decarboxylase of Dehalococcoides mccartyi (strain CBDB1).